Reading from the N-terminus, the 492-residue chain is Probable endopolygalacturonase D (492 aa).

A signal peptide spans M1 to G16. A disulfide bridge connects residues C151 and C166. PbH1 repeat units follow at residues G216–D238, M258–S280, T281–E319, and S320–S341. An N-linked (GlcNAc...) asparagine glycan is attached at N292. Catalysis depends on D334, which acts as the Proton donor. An intrachain disulfide couples C336 to C352. H356 is a catalytic residue. 3 PbH1 repeats span residues V371–T392, V400–Q422, and T434–G478. N407 and N441 each carry an N-linked (GlcNAc...) asparagine glycan. Cystine bridges form between C461–C466 and C484–C491.

This sequence belongs to the glycosyl hydrolase 28 family.

It is found in the secreted. It carries out the reaction (1,4-alpha-D-galacturonosyl)n+m + H2O = (1,4-alpha-D-galacturonosyl)n + (1,4-alpha-D-galacturonosyl)m.. Its function is as follows. Involved in maceration and soft-rotting of plant tissue. Hydrolyzes the 1,4-alpha glycosidic bonds of de-esterified pectate in the smooth region of the plant cell wall. This Aspergillus flavus (strain ATCC 200026 / FGSC A1120 / IAM 13836 / NRRL 3357 / JCM 12722 / SRRC 167) protein is Probable endopolygalacturonase D (pgaD).